Reading from the N-terminus, the 111-residue chain is PCNA-associated factor (111 aa).

At Ser-8 the chain carries Phosphoserine. Lys-15 participates in a covalent cross-link: Glycyl lysine isopeptide (Lys-Gly) (interchain with G-Cter in ubiquitin). The D-box signature appears at 23–34; the sequence is RKVLGSSTSATN. The tract at residues 23-111 is disordered; that stretch reads RKVLGSSTSA…QPDHTNDEKE (89 aa). N6-acetyllysine; alternate is present on Lys-24. A Glycyl lysine isopeptide (Lys-Gly) (interchain with G-Cter in ubiquitin); alternate cross-link involves residue Lys-24. Ser-28, Ser-31, and Ser-72 each carry phosphoserine. Positions 28–40 are enriched in low complexity; it reads SSTSATNSTSVSS. The PIP-box motif lies at 62–72; it reads QKGIGEFFRLS. Residues 72-81 show a composition bias toward basic and acidic residues; it reads SPKDSEKENQ. The short motif at 78–80 is the KEN box element; it reads KEN. The Initiation motif motif lies at 85–97; sequence EAGSSGLGKAKRK.

In terms of assembly, interacts (when monoubiquitinated at Lys-15 and Lys-24) with PCNA. Interacts with isoform 2/p33ING1b of ING1. Interacts with BRCA1. In terms of processing, monoubiquitinated at Lys-15 and Lys-24 during normal S phase, promoting its association with PCNA. Also diubiquitinated at these 2 sites. Following DNA damage, monoubiquitin chains at Lys-15 and Lys-24 are probably extended, leading to disrupt the interaction with PCNA. Polyubiquitinated by the APC/C complex at the mitotic exit, leading to its degradation by the proteasome. Expressed predominantly in liver, pancreas and placenta. Not detected in heart or brain. Highly expressed in a number of tumors, especially esophageal tumors, in anaplastic thyroid carcinomas, adrenocortical carcinomas, and in non-small-cell lung cancer lines.

It localises to the nucleus. The protein resides in the cytoplasm. Its subcellular location is the perinuclear region. Functionally, PCNA-binding protein that acts as a regulator of DNA repair during DNA replication. Following DNA damage, the interaction with PCNA is disrupted, facilitating the interaction between monoubiquitinated PCNA and the translesion DNA synthesis DNA polymerase eta (POLH) at stalled replisomes, facilitating the bypass of replication-fork-blocking lesions. Also acts as a regulator of centrosome number. In Homo sapiens (Human), this protein is PCNA-associated factor.